The primary structure comprises 371 residues: MGLLSKKLLVASMVAAVLAVAAVELCSAIPMEDKDLESEEALWDLYERWQSAHRVRRHHAEKHRRFGTFKSNAHFIHSHNKRGDHPYRLHLNRFGDMDQAEFRATFVGDLRRDTPAKPPSVPGFMYAALNVSDLPPSVDWRQKGAVTGVKDQGKCGSCWAFSTVVSVEGINAIRTGSLVSLSEQELIDCDTADNDGCQGGLMDNAFEYIKNNGGLITEAAYPYRAARGTCNVARAAQNSPVVVHIDGHQDVPANSEEDLARAVANQPVSVAVEASGKAFMFYSEGVFTGDCGTELDHGVAVVGYGVAEDGKAYWTVKNSWGPSWGEQGYIRVEKDSGASGGLCGIAMEASYPVKTYNKPMPRRALGAWESQ.

Residues 1–28 (MGLLSKKLLVASMVAAVLAVAAVELCSA) form the signal peptide. Residues 29–133 (IPMEDKDLES…FMYAALNVSD (105 aa)) constitute a propeptide, activation peptide. N-linked (GlcNAc...) asparagine glycosylation occurs at N130. Intrachain disulfides connect C155/C197, C189/C230, and C291/C343. The active site involves C158. Active-site residues include H297 and N318.

The protein belongs to the peptidase C1 family.

This chain is Cysteine proteinase EP-B 1, found in Hordeum vulgare (Barley).